Here is a 294-residue protein sequence, read N- to C-terminus: N-acetylmuramic acid 6-phosphate etherase (294 aa).

The 164-residue stretch at 54 to 217 (VIQSFEEEGR…STASMIGVGK (164 aa)) folds into the SIS domain. The active-site Proton donor is the E82. The active site involves E113.

This sequence belongs to the GCKR-like family. MurNAc-6-P etherase subfamily. As to quaternary structure, homodimer.

It catalyses the reaction N-acetyl-D-muramate 6-phosphate + H2O = N-acetyl-D-glucosamine 6-phosphate + (R)-lactate. It functions in the pathway amino-sugar metabolism; N-acetylmuramate degradation. Its function is as follows. Specifically catalyzes the cleavage of the D-lactyl ether substituent of MurNAc 6-phosphate, producing GlcNAc 6-phosphate and D-lactate. This chain is N-acetylmuramic acid 6-phosphate etherase, found in Bacillus anthracis (strain A0248).